A 290-amino-acid chain; its full sequence is 4-hydroxy-tetrahydrodipicolinate synthase (290 aa).

Thr-44 provides a ligand contact to pyruvate. Tyr-132 serves as the catalytic Proton donor/acceptor. The active-site Schiff-base intermediate with substrate is Lys-160. Ile-202 serves as a coordination point for pyruvate.

It belongs to the DapA family. Homotetramer; dimer of dimers.

Its subcellular location is the cytoplasm. It carries out the reaction L-aspartate 4-semialdehyde + pyruvate = (2S,4S)-4-hydroxy-2,3,4,5-tetrahydrodipicolinate + H2O + H(+). It participates in amino-acid biosynthesis; L-lysine biosynthesis via DAP pathway; (S)-tetrahydrodipicolinate from L-aspartate: step 3/4. Functionally, catalyzes the condensation of (S)-aspartate-beta-semialdehyde [(S)-ASA] and pyruvate to 4-hydroxy-tetrahydrodipicolinate (HTPA). The polypeptide is 4-hydroxy-tetrahydrodipicolinate synthase (Legionella pneumophila subsp. pneumophila (strain Philadelphia 1 / ATCC 33152 / DSM 7513)).